The sequence spans 493 residues: 3-octaprenyl-4-hydroxybenzoate carboxy-lyase (493 aa).

Residue asparagine 172 participates in Mn(2+) binding. Residues 175-177 (IYR), 189-191 (RWL), and 194-195 (RG) each bind prenylated FMN. Glutamate 238 lines the Mn(2+) pocket. Residue aspartate 287 is the Proton donor of the active site.

The protein belongs to the UbiD family. Homohexamer. Requires prenylated FMN as cofactor. The cofactor is Mn(2+).

Its subcellular location is the cell membrane. The catalysed reaction is a 4-hydroxy-3-(all-trans-polyprenyl)benzoate + H(+) = a 2-(all-trans-polyprenyl)phenol + CO2. It participates in cofactor biosynthesis; ubiquinone biosynthesis. Functionally, catalyzes the decarboxylation of 3-octaprenyl-4-hydroxy benzoate to 2-octaprenylphenol, an intermediate step in ubiquinone biosynthesis. The polypeptide is 3-octaprenyl-4-hydroxybenzoate carboxy-lyase (Shewanella denitrificans (strain OS217 / ATCC BAA-1090 / DSM 15013)).